The following is a 401-amino-acid chain: Phosphoglycerate kinase (401 aa).

Substrate is bound by residues 20 to 22 (DFN), arginine 35, 58 to 61 (HLGR), arginine 117, and arginine 154. Residues lysine 204, glycine 298, glutamate 329, and 358–361 (GGDS) each bind ATP.

Belongs to the phosphoglycerate kinase family. In terms of assembly, monomer.

It is found in the cytoplasm. The catalysed reaction is (2R)-3-phosphoglycerate + ATP = (2R)-3-phospho-glyceroyl phosphate + ADP. It functions in the pathway carbohydrate degradation; glycolysis; pyruvate from D-glyceraldehyde 3-phosphate: step 2/5. This Bifidobacterium longum (strain NCC 2705) protein is Phosphoglycerate kinase.